The following is a 157-amino-acid chain: Protein SINE4 (157 aa).

The region spanning 104-157 (VTSSSDTTKAKKKTTIRRFVSVTMVLLLSWVLVVLMNHFDHLSMNTQIITLVPT) is the KASH domain. Residues 122 to 142 (FVSVTMVLLLSWVLVVLMNHF) form a helical membrane-spanning segment. The Required for nuclear localization signature appears at 154–157 (LVPT).

In terms of assembly, interacts with SUN1 and SUN2.

The protein localises to the nucleus membrane. The sequence is that of Protein SINE4 from Arabidopsis thaliana (Mouse-ear cress).